We begin with the raw amino-acid sequence, 350 residues long: Phosphotriesterase-related protein (350 aa).

A divalent metal cation contacts are provided by His-22, His-24, Glu-169, His-201, His-230, and Asp-298.

The protein belongs to the metallo-dependent hydrolases superfamily. Phosphotriesterase family. A divalent metal cation is required as a cofactor.

The sequence is that of Phosphotriesterase-related protein from Drosophila grimshawi (Hawaiian fruit fly).